The chain runs to 494 residues: Protein DETOXIFICATION 22 (494 aa).

12 helical membrane-spanning segments follow: residues 40–60 (LWVV…VSLV), 78–98 (ITFT…ASAL), 123–143 (IVLT…GPIL), 159–179 (IALW…CQIF), 188–208 (IIAY…WLLV), 217–237 (GAMT…LLYV), 268–288 (GGMV…TGNL), 299–319 (AICI…LAAV), 340–360 (IVAV…FLFL), 384–404 (LLAF…VAVG), 416–436 (LACY…VVGL), and 441–461 (VWIG…IMTL).

It belongs to the multi antimicrobial extrusion (MATE) (TC 2.A.66.1) family.

The protein resides in the membrane. This is Protein DETOXIFICATION 22 from Arabidopsis thaliana (Mouse-ear cress).